The following is a 496-amino-acid chain: Splicing factor U2AF 65 kDa subunit (496 aa).

Positions 1–26 (MSDHQDGMKLEDIERQFLDVAQREGG) are enriched in basic and acidic residues. A disordered region spans residues 1–142 (MSDHQDGMKL…PKKYRFWDVP (142 aa)). The segment covering 59–77 (KKRKRSRSRDRDTRRRSRS) has biased composition (basic residues). 2 stretches are compositionally biased toward basic and acidic residues: residues 78–96 (RDRG…DRSR) and 105–138 (GGRD…KYRF). 3 consecutive RRM domains span residues 184 to 266 (RRLY…RPRD), 291 to 368 (NKIF…LACA), and 404 to 488 (NMVT…YYDV).

As to quaternary structure, forms a heterodimer with the U2AF small subunit.

Its subcellular location is the nucleus. In terms of biological role, necessary for the splicing of pre-mRNA. Binds to the polypyrimidine tract of introns early during spliceosome assembly. This is Splicing factor U2AF 65 kDa subunit (uaf-1) from Caenorhabditis elegans.